The chain runs to 119 residues: Large ribosomal subunit protein bL20 (119 aa).

This sequence belongs to the bacterial ribosomal protein bL20 family.

Functionally, binds directly to 23S ribosomal RNA and is necessary for the in vitro assembly process of the 50S ribosomal subunit. It is not involved in the protein synthesizing functions of that subunit. This chain is Large ribosomal subunit protein bL20, found in Afipia carboxidovorans (strain ATCC 49405 / DSM 1227 / KCTC 32145 / OM5) (Oligotropha carboxidovorans).